Reading from the N-terminus, the 531-residue chain is GMP synthase [glutamine-hydrolyzing] (531 aa).

Residues 20-213 (KILIVDFGSQ…VRKVAGLKGD (194 aa)) form the Glutamine amidotransferase type-1 domain. Residue C97 is the Nucleophile of the active site. Catalysis depends on residues H187 and E189. Residues 214–406 (WTMRAFREEA…LGLPDVFVGR (193 aa)) enclose the GMPS ATP-PPase domain. Residue 241 to 247 (SGGVDSA) coordinates ATP.

In terms of assembly, homodimer.

It carries out the reaction XMP + L-glutamine + ATP + H2O = GMP + L-glutamate + AMP + diphosphate + 2 H(+). Its pathway is purine metabolism; GMP biosynthesis; GMP from XMP (L-Gln route): step 1/1. Its function is as follows. Catalyzes the synthesis of GMP from XMP. The polypeptide is GMP synthase [glutamine-hydrolyzing] (Afipia carboxidovorans (strain ATCC 49405 / DSM 1227 / KCTC 32145 / OM5) (Oligotropha carboxidovorans)).